The sequence spans 104 residues: Large ribosomal subunit protein bL21c (104 aa).

It belongs to the bacterial ribosomal protein bL21 family. As to quaternary structure, part of the 50S ribosomal subunit.

Its subcellular location is the plastid. It is found in the cyanelle. In terms of biological role, this protein binds to 23S rRNA. This is Large ribosomal subunit protein bL21c from Cyanophora paradoxa.